Consider the following 344-residue polypeptide: ATPase GET3 (344 aa).

26–33 contacts ATP; that stretch reads KGGVGKTT. The active site involves Asp-57. 2 residues coordinate ATP: Glu-239 and Asn-266. Zn(2+)-binding residues include Cys-276 and Cys-279.

The protein belongs to the arsA ATPase family. As to quaternary structure, homodimer. Component of the Golgi to ER traffic (GET) complex, which is composed of GET1, GET2 and GET3. Within the complex, GET1 and GET2 form a heterotetramer which is stabilized by phosphatidylinositol binding and which binds to the GET3 homodimer. Interacts with the chloride channel protein GEF1.

The protein localises to the cytoplasm. It is found in the endoplasmic reticulum. It localises to the golgi apparatus. Its function is as follows. ATPase required for the post-translational delivery of tail-anchored (TA) proteins to the endoplasmic reticulum. Recognizes and selectively binds the transmembrane domain of TA proteins in the cytosol. This complex then targets to the endoplasmic reticulum by membrane-bound receptors GET1 and GET2, where the tail-anchored protein is released for insertion. This process is regulated by ATP binding and hydrolysis. ATP binding drives the homodimer towards the closed dimer state, facilitating recognition of newly synthesized TA membrane proteins. ATP hydrolysis is required for insertion. Subsequently, the homodimer reverts towards the open dimer state, lowering its affinity for the GET1-GET2 receptor, and returning it to the cytosol to initiate a new round of targeting. Cooperates with the HDEL receptor ERD2 to mediate the ATP-dependent retrieval of resident ER proteins that contain a C-terminal H-D-E-L retention signal from the Golgi to the ER. Involved in low-level resistance to the oxyanions arsenite and arsenate, and in heat tolerance. The sequence is that of ATPase GET3 from Komagataella phaffii (strain GS115 / ATCC 20864) (Yeast).